Reading from the N-terminus, the 396-residue chain is DNA dC-&gt;dU-editing enzyme APOBEC3 (396 aa).

CMP/dCMP-type deaminase domains are found at residues 38-154 (GRKD…AQVA) and 205-324 (EEEF…LCSL). His71 is a Zn(2+) binding site. Catalysis depends on Glu73, which acts as the Proton donor. Positions 105, 108, 255, 283, and 286 each coordinate Zn(2+).

This sequence belongs to the cytidine and deoxycytidylate deaminase family. In terms of assembly, homodimer. Zn(2+) serves as cofactor.

The protein resides in the cytoplasm. It carries out the reaction a 2'-deoxycytidine in single-stranded DNA + H2O + H(+) = a 2'-deoxyuridine in single-stranded DNA + NH4(+). Its function is as follows. DNA deaminase (cytidine deaminase) which acts as an inhibitor of retrovirus replication and retrotransposon mobility via deaminase-dependent and -independent mechanisms. Selectively targets single-stranded DNA and does not deaminate double-stranded DNA or single- or double-stranded RNA. The protein is DNA dC-&gt;dU-editing enzyme APOBEC3 (APOBEC3) of Cricetulus longicaudatus (Long-tailed dwarf hamster).